Reading from the N-terminus, the 138-residue chain is Outer membrane protein assembly factor BamE (138 aa).

Positions 1 to 42 are cleaved as a signal peptide; it reads MSHLTMIKTLNLRPFHSASALRKIVITSILGVAVTMSGCSLL.

Belongs to the BamE family. Part of the Bam complex.

The protein resides in the cell outer membrane. In terms of biological role, part of the outer membrane protein assembly complex, which is involved in assembly and insertion of beta-barrel proteins into the outer membrane. This chain is Outer membrane protein assembly factor BamE, found in Psychrobacter arcticus (strain DSM 17307 / VKM B-2377 / 273-4).